Here is a 211-residue protein sequence, read N- to C-terminus: Ribonuclease HII (211 aa).

The region spanning 21-211 is the RNase H type-2 domain; the sequence is SSIAGLDEAG…APLKSMFDVI (191 aa). Aspartate 27, glutamate 28, and aspartate 122 together coordinate a divalent metal cation.

Belongs to the RNase HII family. Mn(2+) serves as cofactor. Mg(2+) is required as a cofactor.

It is found in the cytoplasm. It catalyses the reaction Endonucleolytic cleavage to 5'-phosphomonoester.. Endonuclease that specifically degrades the RNA of RNA-DNA hybrids. The chain is Ribonuclease HII from Dehalococcoides mccartyi (strain ATCC BAA-2266 / KCTC 15142 / 195) (Dehalococcoides ethenogenes (strain 195)).